The sequence spans 191 residues: Fe/S biogenesis protein NfuA (191 aa).

[4Fe-4S] cluster-binding residues include Cys149 and Cys152.

The protein belongs to the NfuA family. As to quaternary structure, homodimer. [4Fe-4S] cluster serves as cofactor.

Its function is as follows. Involved in iron-sulfur cluster biogenesis. Binds a 4Fe-4S cluster, can transfer this cluster to apoproteins, and thereby intervenes in the maturation of Fe/S proteins. Could also act as a scaffold/chaperone for damaged Fe/S proteins. This chain is Fe/S biogenesis protein NfuA, found in Pseudoalteromonas translucida (strain TAC 125).